A 1024-amino-acid polypeptide reads, in one-letter code: Beta-galactosidase (1024 aa).

Residues asparagine 103 and aspartate 202 each contribute to the substrate site. Position 202 (aspartate 202) interacts with Na(+). Residues glutamate 417, histidine 419, and glutamate 462 each contribute to the Mg(2+) site. Substrate-binding positions include glutamate 462 and 538 to 541; that span reads EYAH. Glutamate 462 acts as the Proton donor in catalysis. The Nucleophile role is filled by glutamate 538. Position 598 (asparagine 598) interacts with Mg(2+). Na(+) contacts are provided by phenylalanine 602 and asparagine 605. Residues asparagine 605 and tryptophan 1000 each contribute to the substrate site.

It belongs to the glycosyl hydrolase 2 family. In terms of assembly, homotetramer. It depends on Mg(2+) as a cofactor. The cofactor is Na(+).

The catalysed reaction is Hydrolysis of terminal non-reducing beta-D-galactose residues in beta-D-galactosides.. The polypeptide is Beta-galactosidase (Escherichia coli (strain ATCC 8739 / DSM 1576 / NBRC 3972 / NCIMB 8545 / WDCM 00012 / Crooks)).